The sequence spans 422 residues: Choline monooxygenase, chloroplastic (422 aa).

The N-terminal 47 residues, 1-47 (MMTTLTATVPEFLPPSLKSTRGYFNSHSEFGVSISKFSRRRFHNPTR), are a transit peptide targeting the chloroplast. Residues 96 to 203 (WQAVGYSDQI…VAVWGPFVLL (108 aa)) form the Rieske domain. [2Fe-2S] cluster contacts are provided by Cys-138, His-140, Cys-157, and His-160. Fe cation contacts are provided by His-269 and His-274.

This sequence belongs to the choline monooxygenase family. [2Fe-2S] cluster is required as a cofactor. It depends on Fe cation as a cofactor. Mg(2+) serves as cofactor.

The protein resides in the plastid. The protein localises to the chloroplast stroma. The catalysed reaction is choline + 2 reduced [2Fe-2S]-[ferredoxin] + O2 + 2 H(+) = betaine aldehyde hydrate + 2 oxidized [2Fe-2S]-[ferredoxin] + H2O. Its pathway is amine and polyamine biosynthesis; betaine biosynthesis via choline pathway; betaine aldehyde from choline (monooxygenase route): step 1/1. In terms of biological role, catalyzes the first step of the osmoprotectant glycine betaine synthesis. The polypeptide is Choline monooxygenase, chloroplastic (Arabidopsis thaliana (Mouse-ear cress)).